A 238-amino-acid polypeptide reads, in one-letter code: Valine-rich protein (238 aa).

An N-terminal signal peptide occupies residues 1–16 (MQAVLLVVALFGAALA).

As to expression, prismatic layer of shell (at protein level). Expressed primarily in the mantle with highest level in the mantle edge and lower level in the mantle pallium.

It is found in the secreted. The chain is Valine-rich protein from Pinctada maxima (Silver-lipped pearl oyster).